The following is a 117-amino-acid chain: Probable non-functional immunoglobulin heavy variable 7-81 (117 aa).

The first 19 residues, 1–19 (MDWTWSILFLVAAATGTYS), serve as a signal peptide directing secretion. A framework-1 region spans residues 20–44 (QVQLVQSGHEVKQPGASVKVSCKAS). The Ig-like domain maps to 20–117 (QVQLVQSGHE…EDMAMYYCAR (98 aa)). An intrachain disulfide couples cysteine 41 to cysteine 115. Positions 45-52 (GYSFTTYG) are complementarity-determining-1. A framework-2 region spans residues 53 to 69 (MNWVPQAPGQGLEWMGW). Residues 70-77 (FNTYTGNP) form a complementarity-determining-2 region. A glycan (N-linked (GlcNAc...) asparagine) is linked at asparagine 76. The segment at 78–115 (TYAQGFTGRFVFSMDTSASTAYLQISSLKAEDMAMYYC) is framework-3. Positions 116–117 (AR) are complementarity-determining-3.

In terms of assembly, immunoglobulins are composed of two identical heavy chains and two identical light chains; disulfide-linked.

It is found in the secreted. The protein localises to the cell membrane. Its function is as follows. Probable non-functional open reading frame (ORF) of V region of the variable domain of immunoglobulin heavy chains. Non-functional ORF generally cannot participate in the synthesis of a productive immunoglobulin chain due to altered V-(D)-J or switch recombination and/or splicing site (at mRNA level) and/or conserved amino acid change (protein level). Immunoglobulins, also known as antibodies, are membrane-bound or secreted glycoproteins produced by B lymphocytes. In the recognition phase of humoral immunity, the membrane-bound immunoglobulins serve as receptors which, upon binding of a specific antigen, trigger the clonal expansion and differentiation of B lymphocytes into immunoglobulins-secreting plasma cells. Secreted immunoglobulins mediate the effector phase of humoral immunity, which results in the elimination of bound antigens. The antigen binding site is formed by the variable domain of one heavy chain, together with that of its associated light chain. Thus, each immunoglobulin has two antigen binding sites with remarkable affinity for a particular antigen. The variable domains are assembled by a process called V-(D)-J rearrangement and can then be subjected to somatic hypermutations which, after exposure to antigen and selection, allow affinity maturation for a particular antigen. The chain is Probable non-functional immunoglobulin heavy variable 7-81 from Homo sapiens (Human).